The sequence spans 146 residues: Large ribosomal subunit protein uL11 (146 aa).

It belongs to the universal ribosomal protein uL11 family. Part of the ribosomal stalk of the 50S ribosomal subunit. Interacts with L10 and the large rRNA to form the base of the stalk. L10 forms an elongated spine to which L12 dimers bind in a sequential fashion forming a multimeric L10(L12)X complex. One or more lysine residues are methylated.

Its function is as follows. Forms part of the ribosomal stalk which helps the ribosome interact with GTP-bound translation factors. This is Large ribosomal subunit protein uL11 from Wolbachia pipientis wMel.